We begin with the raw amino-acid sequence, 74 residues long: Guanine nucleotide-binding protein G(T) subunit gamma-T1 (74 aa).

A Cysteine methyl ester modification is found at C71. A lipid anchor (S-farnesyl cysteine) is attached at C71. The propeptide at 72-74 (VIS) is removed in mature form.

It belongs to the G protein gamma family. G proteins are composed of 3 units, alpha, beta and gamma. As to expression, retinal rod outer segment.

The protein localises to the cell membrane. Functionally, guanine nucleotide-binding proteins (G proteins) are involved as a modulator or transducer in various transmembrane signaling systems. The beta and gamma chains are required for the GTPase activity, for replacement of GDP by GTP, and for G protein-effector interaction. The chain is Guanine nucleotide-binding protein G(T) subunit gamma-T1 (Gngt1) from Mus musculus (Mouse).